We begin with the raw amino-acid sequence, 453 residues long: tRNA modification GTPase MnmE (453 aa).

Residues R22, E79, and K119 each contribute to the (6S)-5-formyl-5,6,7,8-tetrahydrofolate site. The TrmE-type G domain occupies 215–376; that stretch reads GMKVVIAGRP…LKLHLKSLMG (162 aa). Residue N225 participates in K(+) binding. GTP-binding positions include 225 to 230, 244 to 250, 269 to 272, and 334 to 337; these read NAGKSS, TEIAGTT, DTAG, and NKAD. S229 lines the Mg(2+) pocket. The K(+) site is built by T244, I246, and T249. T250 contributes to the Mg(2+) binding site. K453 is a (6S)-5-formyl-5,6,7,8-tetrahydrofolate binding site.

The protein belongs to the TRAFAC class TrmE-Era-EngA-EngB-Septin-like GTPase superfamily. TrmE GTPase family. Homodimer. Heterotetramer of two MnmE and two MnmG subunits. Requires K(+) as cofactor.

It is found in the cytoplasm. Functionally, exhibits a very high intrinsic GTPase hydrolysis rate. Involved in the addition of a carboxymethylaminomethyl (cmnm) group at the wobble position (U34) of certain tRNAs, forming tRNA-cmnm(5)s(2)U34. This chain is tRNA modification GTPase MnmE, found in Shewanella sp. (strain W3-18-1).